The following is a 342-amino-acid chain: Putative ABC transporter anion-binding protein HVO_1888 (342 aa).

A signal peptide (tat-type signal) is located at residues 1-32; the sequence is MAIERRRFLQAAGVGAVLGLSGCTGNTSPPQA. The span at 24–37 shows a compositional bias: polar residues; that stretch reads TGNTSPPQANNETA. Residues 24-52 form a disordered region; sequence TGNTSPPQANNETAEGSGGSESGDGSTQE.

As to quaternary structure, the complex is composed of two ATP-binding proteins (HVO_1886), two transmembrane proteins (HVO_1887) and a solute-binding protein (HVO_1888). Predicted to be exported by the Tat system. The position of the signal peptide cleavage has not been experimentally proven.

Its function is as follows. Part of an ABC transporter complex involved in anions import. The sequence is that of Putative ABC transporter anion-binding protein HVO_1888 from Haloferax volcanii (strain ATCC 29605 / DSM 3757 / JCM 8879 / NBRC 14742 / NCIMB 2012 / VKM B-1768 / DS2) (Halobacterium volcanii).